Reading from the N-terminus, the 255-residue chain is DNA repair protein RecO (255 aa).

This sequence belongs to the RecO family.

Functionally, involved in DNA repair and RecF pathway recombination. The chain is DNA repair protein RecO from Bacillus velezensis (strain DSM 23117 / BGSC 10A6 / LMG 26770 / FZB42) (Bacillus amyloliquefaciens subsp. plantarum).